The primary structure comprises 689 residues: Beta-galactosidase Pbg (689 aa).

R118 lines the substrate pocket. C122 provides a ligand contact to Zn(2+). Residue N156 coordinates substrate. Catalysis depends on E157, which acts as the Proton donor. Residues C162, C164, and C167 each coordinate Zn(2+). The active-site Nucleophile is the E318. Substrate is bound by residues W326 and 366–369 (EKFH).

Belongs to the glycosyl hydrolase 42 family.

It catalyses the reaction Hydrolysis of terminal non-reducing beta-D-galactose residues in beta-D-galactosides.. This is Beta-galactosidase Pbg from Clostridium perfringens (strain ATCC 13124 / DSM 756 / JCM 1290 / NCIMB 6125 / NCTC 8237 / Type A).